We begin with the raw amino-acid sequence, 36 residues long: Dolichyl-diphosphooligosaccharide--protein glycosyltransferase subunit 2 (36 aa).

Belongs to the SWP1 family. Component of the oligosaccharyltransferase (OST) complex.

It localises to the endoplasmic reticulum. The protein resides in the endoplasmic reticulum membrane. It functions in the pathway protein modification; protein glycosylation. Its function is as follows. Subunit of the oligosaccharyl transferase (OST) complex that catalyzes the initial transfer of a defined glycan (Glc(3)Man(9)GlcNAc(2) in eukaryotes) from the lipid carrier dolichol-pyrophosphate to an asparagine residue within an Asn-X-Ser/Thr consensus motif in nascent polypeptide chains, the first step in protein N-glycosylation. N-glycosylation occurs cotranslationally and the complex associates with the Sec61 complex at the channel-forming translocon complex that mediates protein translocation across the endoplasmic reticulum (ER). All subunits are required for a maximal enzyme activity. In Gallus gallus (Chicken), this protein is Dolichyl-diphosphooligosaccharide--protein glycosyltransferase subunit 2.